The following is a 313-amino-acid chain: uncharacterized protein (313 aa).

Transmembrane regions (helical) follow at residues 19–41 (GLAVAIALITAIAWFPDGLAGFL), 51–68 (AIIGAILTILGLSIIFFL), and 81–103 (IAEFGFIVLTLIFSLIVFNDFAI).

The protein localises to the cell membrane. This is an uncharacterized protein from Aquifex aeolicus (strain VF5).